The following is a 310-amino-acid chain: Mitochondrial citrate transporter E (310 aa).

Solcar repeat units follow at residues Ser2–Gly95, Gln107–Arg199, and Asp208–Ile293. Transmembrane regions (helical) follow at residues Phe8–Val28, Gly72–Leu92, Leu114–Val133, Ala178–Arg198, Gly211–Met228, and Ile265–Leu286.

The protein belongs to the mitochondrial carrier (TC 2.A.29) family.

The protein resides in the mitochondrion inner membrane. Functionally, mitochondrial transporter that does not mediate citrate export from mitochondria to cytoplasm. Its exact function has still to be determined. The sequence is that of Mitochondrial citrate transporter E from Aspergillus niger (strain ATCC 1015 / CBS 113.46 / FGSC A1144 / LSHB Ac4 / NCTC 3858a / NRRL 328 / USDA 3528.7).